The following is a 60-amino-acid chain: Large ribosomal subunit protein uL30 (60 aa).

Belongs to the universal ribosomal protein uL30 family. In terms of assembly, part of the 50S ribosomal subunit.

The sequence is that of Large ribosomal subunit protein uL30 from Shewanella loihica (strain ATCC BAA-1088 / PV-4).